Here is a 527-residue protein sequence, read N- to C-terminus: Bifunctional purine biosynthesis protein PurH (527 aa).

The 148-residue stretch at 9–156 (MARKPIRRAL…KNHPSVAVVT (148 aa)) folds into the MGS-like domain.

This sequence belongs to the PurH family.

It catalyses the reaction (6R)-10-formyltetrahydrofolate + 5-amino-1-(5-phospho-beta-D-ribosyl)imidazole-4-carboxamide = 5-formamido-1-(5-phospho-D-ribosyl)imidazole-4-carboxamide + (6S)-5,6,7,8-tetrahydrofolate. It carries out the reaction IMP + H2O = 5-formamido-1-(5-phospho-D-ribosyl)imidazole-4-carboxamide. It functions in the pathway purine metabolism; IMP biosynthesis via de novo pathway; 5-formamido-1-(5-phospho-D-ribosyl)imidazole-4-carboxamide from 5-amino-1-(5-phospho-D-ribosyl)imidazole-4-carboxamide (10-formyl THF route): step 1/1. It participates in purine metabolism; IMP biosynthesis via de novo pathway; IMP from 5-formamido-1-(5-phospho-D-ribosyl)imidazole-4-carboxamide: step 1/1. The chain is Bifunctional purine biosynthesis protein PurH from Mycobacterium leprae (strain Br4923).